Reading from the N-terminus, the 243-residue chain is NH(3)-dependent NAD(+) synthetase (243 aa).

31 to 38 (GLSGGVDS) is an ATP binding site. D37 contacts Mg(2+). R116 contacts deamido-NAD(+). T136 lines the ATP pocket. E141 lines the Mg(2+) pocket. Deamido-NAD(+) contacts are provided by K149 and D156. ATP-binding residues include K165 and S187. 233-234 (HK) is a deamido-NAD(+) binding site.

Belongs to the NAD synthetase family. Homodimer.

It carries out the reaction deamido-NAD(+) + NH4(+) + ATP = AMP + diphosphate + NAD(+) + H(+). It functions in the pathway cofactor biosynthesis; NAD(+) biosynthesis; NAD(+) from deamido-NAD(+) (ammonia route): step 1/1. Functionally, catalyzes the ATP-dependent amidation of deamido-NAD to form NAD. Uses ammonia as a nitrogen source. The chain is NH(3)-dependent NAD(+) synthetase from Carboxydothermus hydrogenoformans (strain ATCC BAA-161 / DSM 6008 / Z-2901).